Here is a 592-residue protein sequence, read N- to C-terminus: V-type ATP synthase alpha chain (592 aa).

232–239 (GPFGAGKT) contacts ATP.

This sequence belongs to the ATPase alpha/beta chains family.

The catalysed reaction is ATP + H2O + 4 H(+)(in) = ADP + phosphate + 5 H(+)(out). Its function is as follows. Produces ATP from ADP in the presence of a proton gradient across the membrane. The V-type alpha chain is a catalytic subunit. The protein is V-type ATP synthase alpha chain of Clostridium botulinum (strain Alaska E43 / Type E3).